The primary structure comprises 349 residues: Phosphoribosylformylglycinamidine cyclo-ligase (349 aa).

The protein belongs to the AIR synthase family.

Its subcellular location is the cytoplasm. The enzyme catalyses 2-formamido-N(1)-(5-O-phospho-beta-D-ribosyl)acetamidine + ATP = 5-amino-1-(5-phospho-beta-D-ribosyl)imidazole + ADP + phosphate + H(+). Its pathway is purine metabolism; IMP biosynthesis via de novo pathway; 5-amino-1-(5-phospho-D-ribosyl)imidazole from N(2)-formyl-N(1)-(5-phospho-D-ribosyl)glycinamide: step 2/2. This Lactobacillus delbrueckii subsp. bulgaricus (strain ATCC BAA-365 / Lb-18) protein is Phosphoribosylformylglycinamidine cyclo-ligase.